The primary structure comprises 360 residues: Photosystem II protein D1 2 (360 aa).

The next 3 helical transmembrane spans lie at 29 to 46 (YVGW…TATT), 118 to 133 (HFLI…EWEL), and 142 to 156 (WICV…AATA). Position 118 (histidine 118) interacts with chlorophyll a. Tyrosine 126 contributes to the pheophytin a binding site. [CaMn4O5] cluster contacts are provided by aspartate 170 and glutamate 189. A helical membrane pass occupies residues 197 to 218 (FHMLGVAGVFGGSLFSAMHGSL). Chlorophyll a is bound at residue histidine 198. A quinone is bound by residues histidine 215 and 264–265 (SF). Histidine 215 contacts Fe cation. A Fe cation-binding site is contributed by histidine 272. Residues 274–288 (FLGAWPVVGIWFTAL) form a helical membrane-spanning segment. The [CaMn4O5] cluster site is built by histidine 332, glutamate 333, aspartate 342, and alanine 344. Positions 345–360 (AGEQAPVALQAPAING) are excised as a propeptide.

This sequence belongs to the reaction center PufL/M/PsbA/D family. As to quaternary structure, PSII is composed of 1 copy each of membrane proteins PsbA, PsbB, PsbC, PsbD, PsbE, PsbF, PsbH, PsbI, PsbJ, PsbK, PsbL, PsbM, PsbT, PsbX, PsbY, PsbZ, Psb30/Ycf12, peripheral proteins PsbO, CyanoQ (PsbQ), PsbU, PsbV and a large number of cofactors. It forms dimeric complexes. The D1/D2 heterodimer binds P680, chlorophylls that are the primary electron donor of PSII, and subsequent electron acceptors. It shares a non-heme iron and each subunit binds pheophytin, quinone, additional chlorophylls, carotenoids and lipids. D1 provides most of the ligands for the Mn4-Ca-O5 cluster of the oxygen-evolving complex (OEC). There is also a Cl(-1) ion associated with D1 and D2, which is required for oxygen evolution. The PSII complex binds additional chlorophylls, carotenoids and specific lipids. serves as cofactor. Post-translationally, tyr-161 forms a radical intermediate that is referred to as redox-active TyrZ, YZ or Y-Z. C-terminally processed by CtpA; processing is essential to allow assembly of the oxygen-evolving complex and thus photosynthetic growth.

It is found in the cellular thylakoid membrane. It catalyses the reaction 2 a plastoquinone + 4 hnu + 2 H2O = 2 a plastoquinol + O2. In terms of biological role, photosystem II (PSII) is a light-driven water:plastoquinone oxidoreductase that uses light energy to abstract electrons from H(2)O, generating O(2) and a proton gradient subsequently used for ATP formation. It consists of a core antenna complex that captures photons, and an electron transfer chain that converts photonic excitation into a charge separation. The D1/D2 (PsbA/PsbD) reaction center heterodimer binds P680, the primary electron donor of PSII as well as several subsequent electron acceptors. This Picosynechococcus sp. (strain ATCC 27264 / PCC 7002 / PR-6) (Agmenellum quadruplicatum) protein is Photosystem II protein D1 2.